A 614-amino-acid polypeptide reads, in one-letter code: ATP-dependent zinc metalloprotease FtsH (614 aa).

Topologically, residues 1–7 (MKKQWKK) are stromal. Residues 8–28 (IVLFVLPVIITLITLSSFLFY) form a helical membrane-spanning segment. Residues 29–116 (NQDVVHNWSS…AHPSSSNVNL (88 aa)) lie on the Lumenal side of the membrane. Residues 117–137 (VSWLSNLLLPLILIITLFFFF) form a helical membrane-spanning segment. The Stromal segment spans residues 138-614 (RRGNKSSSGP…EFMRIVEERV (477 aa)). 211-218 (GPPGTGKT) is a binding site for ATP. His432 is a Zn(2+) binding site. Residue Glu433 is part of the active site. His436 and Asp510 together coordinate Zn(2+).

This sequence in the central section; belongs to the AAA ATPase family. The protein in the C-terminal section; belongs to the peptidase M41 family. As to quaternary structure, homohexamer. It depends on Zn(2+) as a cofactor.

It localises to the plastid. The protein resides in the chloroplast thylakoid membrane. In terms of biological role, acts as a processive, ATP-dependent zinc metallopeptidase. This is ATP-dependent zinc metalloprotease FtsH from Cyanidium caldarium (Red alga).